The following is a 640-amino-acid chain: Chaperone protein DnaK (640 aa).

Position 199 is a phosphothreonine; by autocatalysis (threonine 199). The disordered stretch occupies residues 603 to 640; that stretch reads YAAGETESSAAEPGEPQEKTVDAEVVDAEFEEVKDDKK. Residues 626–640 show a composition bias toward acidic residues; that stretch reads EVVDAEFEEVKDDKK.

It belongs to the heat shock protein 70 family.

Functionally, acts as a chaperone. This Methylobacillus flagellatus (strain ATCC 51484 / DSM 6875 / VKM B-1610 / KT) protein is Chaperone protein DnaK.